Here is a 332-residue protein sequence, read N- to C-terminus: Cysteine and histidine-rich domain-containing protein 1 (332 aa).

A2 bears the N-acetylalanine mark. The segment at 2–77 (ALLCYNRGCG…KPPEPVKPEV (76 aa)) is interaction with PPP5C. Zn(2+) is bound by residues C5, C10, C24, H27, C42, and C43. 2 CHORD domains span residues 5–64 (CYNR…KGRH) and 157–216 (CKNG…TGKH). T47 carries the post-translational modification Phosphothreonine. S51 is modified (phosphoserine). Residues C59, H64, C157, C162, C176, H179, C194, C195, C211, and H216 each contribute to the Zn(2+) site. The disordered stretch occupies residues 61–82 (KGRHNSEKPPEPVKPEVKTTEK). A compositionally biased stretch (basic and acidic residues) spans 64-82 (HNSEKPPEPVKPEVKTTEK). Residues 65–316 (NSEKPPEPVK…AEPMQWASLE (252 aa)) are interaction with HSP90AA1 and HSP90AB1. In terms of domain architecture, CS spans 227 to 316 (VVPCRHDWHQ…AEPMQWASLE (90 aa)).

In terms of assembly, interacts with HSP90AA1, HSP90AB1, PPP5C, ROCK1 and ROCK2.

Functionally, regulates centrosome duplication, probably by inhibiting the kinase activity of ROCK2. Proposed to act as co-chaperone for HSP90. May play a role in the regulation of NOD1 via a HSP90 chaperone complex. In vitro, has intrinsic chaperone activity. This function may be achieved by inhibiting association of ROCK2 with NPM1. Plays a role in ensuring the localization of the tyrosine kinase receptor EGFR to the plasma membrane, and thus ensures the subsequent regulation of EGFR activity and EGF-induced actin cytoskeleton remodeling. Involved in stress response. Prevents tumorigenesis. The protein is Cysteine and histidine-rich domain-containing protein 1 (CHORDC1) of Sus scrofa (Pig).